The sequence spans 304 residues: Thyroxine 5-deiodinase (304 aa).

The segment at 1–22 is disordered; it reads MPRQAASRLVVGEGEGPPGASG. Over 1–44 the chain is Cytoplasmic; sequence MPRQAASRLVVGEGEGPPGASGPAATMLRSLLLHSLRLCAQTAS. Residues 45 to 67 traverse the membrane as a helical; Signal-anchor for type II membrane protein segment; it reads CLVLFPRFLGTAFMLWLLDFLCI. Topologically, residues 68-304 are extracellular; the sequence is RKHFLRRRHP…QLHGTRPHRF (237 aa). Residue Sec-170 is part of the active site. A non-standard amino acid (selenocysteine) is located at residue Sec-170.

It belongs to the iodothyronine deiodinase family. In terms of assembly, monomer. Homodimer. May undergo minor heretodimerization with DIO1 and DIO2.

The protein resides in the cell membrane. It localises to the endosome membrane. It carries out the reaction 3,3',5'-triiodo-L-thyronine + iodide + A + H(+) = L-thyroxine + AH2. The catalysed reaction is 3,3'-diiodo-L-thyronine + iodide + A + H(+) = 3,3',5-triiodo-L-thyronine + AH2. The enzyme catalyses 3-iodo-L-thyronine + iodide + A + H(+) = 3,5-diiodo-L-thyronine + AH2. It catalyses the reaction L-thyronine + iodide + A + H(+) = 3-iodo-L-thyronine + AH2. It carries out the reaction 3',5'-diiodo-L-thyronine + iodide + A + H(+) = 3,3',5'-triiodo-L-thyronine + AH2. The catalysed reaction is 3'-iodo-L-thyronine + iodide + A + H(+) = 3,3'-diiodo-L-thyronine + AH2. The enzyme catalyses 3,3',5'-triiodothyronamine + iodide + A + H(+) = 3,3',5,5'-tetraiodothyronamine + AH2. It catalyses the reaction 3',5'-diiodothyronamine + iodide + A + H(+) = 3,3',5'-triiodothyronamine + AH2. It carries out the reaction 3,3'-diiodothyronamine + iodide + A + H(+) = 3,3',5-triiodothyronamine + AH2. The catalysed reaction is 3-iodothyronamine + iodide + A + H(+) = 3,5-diiodothyronamine + AH2. The enzyme catalyses 3'-iodothyronamine + iodide + A + H(+) = 3,3'-diiodothyronamine + AH2. It catalyses the reaction thyronamine + iodide + A + H(+) = 3-iodothyronamine + AH2. Its function is as follows. Plays a crucial role in the metabolism of thyroid hormones (TH) and has specific roles in TH activation and inactivation by deiodination. Catalyzes the deiodination of L-thyroxine (T4) to 3,3',5'-triiodothyronine (rT3), 3,5,3'-triiodothyronine (T3) to 3,3'-diiodothyronine (3,3'-T2), 3,5-diiodothyronine (3,5-T2) to 3-monoiodothyronine (3-T1), rT3 to 3',5'-diiodothyronine (3',5'-T2) and 3,3'-T2 to 3'-monoiodothyronine (3'-T1) via inner-ring deiodination (IRD). Catalyzes the deiodination of 3-T1 to L-thyronine (T0) via outer-ring deiodination (ORD). Catalyzes the tyrosyl ring deiodinations of 3,3',5,5'-tetraiodothyronamine, 3,3',5'-triiodothyronamine, 3,5,3'-triiodothyronamine, 3,5-diiodothyronamine, 3,3'-diiodothyronamine and 3-iodothyronamine. In Mus musculus (Mouse), this protein is Thyroxine 5-deiodinase (Dio3).